A 252-amino-acid polypeptide reads, in one-letter code: Imidazole glycerol phosphate synthase subunit HisF (252 aa).

Active-site residues include Asp11 and Asp130.

Belongs to the HisA/HisF family. Heterodimer of HisH and HisF.

Its subcellular location is the cytoplasm. The enzyme catalyses 5-[(5-phospho-1-deoxy-D-ribulos-1-ylimino)methylamino]-1-(5-phospho-beta-D-ribosyl)imidazole-4-carboxamide + L-glutamine = D-erythro-1-(imidazol-4-yl)glycerol 3-phosphate + 5-amino-1-(5-phospho-beta-D-ribosyl)imidazole-4-carboxamide + L-glutamate + H(+). It participates in amino-acid biosynthesis; L-histidine biosynthesis; L-histidine from 5-phospho-alpha-D-ribose 1-diphosphate: step 5/9. IGPS catalyzes the conversion of PRFAR and glutamine to IGP, AICAR and glutamate. The HisF subunit catalyzes the cyclization activity that produces IGP and AICAR from PRFAR using the ammonia provided by the HisH subunit. In Staphylococcus aureus (strain MRSA252), this protein is Imidazole glycerol phosphate synthase subunit HisF.